Reading from the N-terminus, the 502-residue chain is Maturase K (502 aa).

Belongs to the intron maturase 2 family. MatK subfamily.

Its subcellular location is the plastid. It localises to the chloroplast. Usually encoded in the trnK tRNA gene intron. Probably assists in splicing its own and other chloroplast group II introns. This Cephalotaxus fortunei (Chinese plum-yew) protein is Maturase K.